The primary structure comprises 63 residues: Cecropin-1 (63 aa).

Positions 1 to 21 (MNFNKVFILVAIVIAIFAGQT) are cleaved as a signal peptide. Residues 22-23 (EA) constitute a propeptide that is removed on maturation. An Arginine amide modification is found at Arg62.

It belongs to the cecropin family.

It is found in the secreted. Its function is as follows. Cecropins have lytic and antibacterial activity against several Gram-positive and Gram-negative bacteria. This is Cecropin-1 (CEC1) from Ceratitis capitata (Mediterranean fruit fly).